The sequence spans 115 residues: Ribonuclease P protein component (115 aa).

This sequence belongs to the RnpA family. Consists of a catalytic RNA component (M1 or rnpB) and a protein subunit.

It catalyses the reaction Endonucleolytic cleavage of RNA, removing 5'-extranucleotides from tRNA precursor.. RNaseP catalyzes the removal of the 5'-leader sequence from pre-tRNA to produce the mature 5'-terminus. It can also cleave other RNA substrates such as 4.5S RNA. The protein component plays an auxiliary but essential role in vivo by binding to the 5'-leader sequence and broadening the substrate specificity of the ribozyme. The polypeptide is Ribonuclease P protein component (Natranaerobius thermophilus (strain ATCC BAA-1301 / DSM 18059 / JW/NM-WN-LF)).